The primary structure comprises 196 residues: T-cell surface glycoprotein CD3 epsilon chain (196 aa).

The first 21 residues, methionine 1–glycine 21, serve as a signal peptide directing secretion. The Extracellular segment spans residues glutamine 22–leucine 116. The Ig-like domain occupies proline 28–tyrosine 102. A disulfide bond links cysteine 49 and cysteine 91. Residues methionine 117 to valine 137 form a helical membrane-spanning segment. The Cytoplasmic segment spans residues tyrosine 138 to arginine 196. The interval proline 150–arginine 196 is disordered. The tract at residues glutamine 164 to arginine 181 is NUMB-binding region. The ITAM domain occupies glutamate 167 to arginine 194. The interval arginine 168–proline 175 is proline-rich sequence. Residues tyrosine 177 and tyrosine 188 each carry the phosphotyrosine modification.

The TCR-CD3 complex is composed of a CD3D/CD3E and a CD3G/CD3E heterodimers that preferentially associate with TCRalpha and TCRbeta, respectively, to form TCRalpha/CD3E/CD3G and TCRbeta/CD3G/CD3E trimers. In turn, the hexamer interacts with CD3Z homodimer to form the TCR-CD3 complex. Alternatively, TCRalpha and TCRbeta can be replaced by TCRgamma and TCRdelta. Interacts with CD6. Interacts (via Proline-rich sequence) with NCK1; the interaction is ligand dependent but independent of tyrosine kinase activation. Post-translationally, phosphorylated on Tyr residues after T-cell receptor triggering by LCK in association with CD4/CD8.

The protein resides in the cell membrane. Functionally, part of the TCR-CD3 complex present on T-lymphocyte cell surface that plays an essential role in adaptive immune response. When antigen presenting cells (APCs) activate T-cell receptor (TCR), TCR-mediated signals are transmitted across the cell membrane by the CD3 chains CD3D, CD3E, CD3G and CD3Z. All CD3 chains contain immunoreceptor tyrosine-based activation motifs (ITAMs) in their cytoplasmic domain. Upon TCR engagement, these motifs become phosphorylated by Src family protein tyrosine kinases LCK and FYN, resulting in the activation of downstream signaling pathways. In addition of this role of signal transduction in T-cell activation, CD3E plays an essential role in correct T-cell development. Also participates in internalization and cell surface down-regulation of TCR-CD3 complexes via endocytosis sequences present in CD3E cytosolic region. In addition to its role as a TCR coreceptor, it serves as a receptor for ITPRIPL1. Ligand recognition inhibits T-cell activation by promoting interaction with NCK1, which prevents CD3E-ZAP70 interaction and blocks the ERK-NFkB signaling cascade and calcium influx. This Sus scrofa (Pig) protein is T-cell surface glycoprotein CD3 epsilon chain (CD3E).